The chain runs to 363 residues: MLACNDDTSLYLLVKQVTKKEIYSNDLENGNVKRGASTHSLYLIGDPKFCRNNSSKQKSIIILCGPTASGKSYLGHELAKAYNGEIINIDSMQVYKEIPIITASPPKSYKTEILYHLYNFLSMTEDFSVIKYLKLATEKIKEITDRGKLPILIGGTGLYINSLVFGYNNIPDISEDLQAQVRNLHVKIGNIELWGKLEKFDPLAASKINQNDTQRLIRAYEVFMQTGKSIFSFQTLPKEQILSDFNCKIIFLNPERKFLYKTCDERLDKIFKEGAIDEIALIKKQFAPKDYTNLKAVGIKEILAYLNGNLTLDEALNAAQIRTRQYAKRQVTWFKNQIQDKITLEYANQEEFTQTLKNSFKTI.

Residue 65–72 participates in ATP binding; that stretch reads GPTASGKS. A substrate-binding site is contributed by 67-72; it reads TASGKS. Interaction with substrate tRNA regions lie at residues 90–93 and 214–218; these read DSMQ and QRLIR.

Belongs to the IPP transferase family. Monomer. It depends on Mg(2+) as a cofactor.

It carries out the reaction adenosine(37) in tRNA + dimethylallyl diphosphate = N(6)-dimethylallyladenosine(37) in tRNA + diphosphate. In terms of biological role, catalyzes the transfer of a dimethylallyl group onto the adenine at position 37 in tRNAs that read codons beginning with uridine, leading to the formation of N6-(dimethylallyl)adenosine (i(6)A). The polypeptide is tRNA dimethylallyltransferase (Rickettsia rickettsii (strain Sheila Smith)).